We begin with the raw amino-acid sequence, 262 residues long: Zinc import ATP-binding protein ZnuC (262 aa).

In terms of domain architecture, ABC transporter spans Ile5–Arg220. Position 37-44 (Gly37–Ser44) interacts with ATP.

The protein belongs to the ABC transporter superfamily. Zinc importer (TC 3.A.1.15.5) family. As to quaternary structure, the complex is composed of two ATP-binding proteins (ZnuC), two transmembrane proteins (ZnuB) and a solute-binding protein (ZnuA).

It localises to the cell inner membrane. It carries out the reaction Zn(2+)(out) + ATP(in) + H2O(in) = Zn(2+)(in) + ADP(in) + phosphate(in) + H(+)(in). Its function is as follows. Part of the ABC transporter complex ZnuABC involved in zinc import. Responsible for energy coupling to the transport system. The sequence is that of Zinc import ATP-binding protein ZnuC from Vibrio cholerae serotype O1 (strain ATCC 39315 / El Tor Inaba N16961).